Consider the following 532-residue polypeptide: Probable inorganic phosphate transporter 1-9 (532 aa).

Residues 1 to 22 (MPELSLLSALDAARIQWYHFKA) are Cytoplasmic-facing. The chain crosses the membrane as a helical span at residues 23–43 (IIVAGMGLFTDAYDLFCIAPI). The Extracellular segment spans residues 44 to 62 (MKMISQIYYHKDSIGTALL). Residues 63–83 (STSYAIALLGTALGQLIFGYL) form a helical membrane-spanning segment. The Cytoplasmic portion of the chain corresponds to 84 to 91 (GDRVGRRK). The chain crosses the membrane as a helical span at residues 92–112 (VYGLSLLIMVFSSFGCGFSVC). Over 113-124 (TTRRSCVMVSLG) the chain is Extracellular. Residues 125-145 (FFRFVLGLGIGGDYPLSATIM) traverse the membrane as a helical segment. Over 146–154 (SEFANKRTR) the chain is Cytoplasmic. A helical membrane pass occupies residues 155–175 (GAFIAAVFSMQGLGILMSSAV). Topologically, residues 176 to 207 (TMVVCLAFKNAGEGSSEKTNVAGLETLAPPES) are extracellular. A helical membrane pass occupies residues 208–228 (DIAWRLILMIGALPAALTFYW). The Cytoplasmic segment spans residues 229 to 292 (RMLMPETARY…KLFSRRFLSL (64 aa)). The helical transmembrane segment at 293-313 (HGRDLFAASANWFLVDVVFYT) threads the bilayer. Topologically, residues 314 to 343 (SNLLLSQIFNFSNKPLNSTNVYDSAFEVAK) are extracellular. A helical transmembrane segment spans residues 344–364 (LAAIVAACSTIPGYWFTVYFI). Over 365-371 (DKIGRVK) the chain is Cytoplasmic. Residues 372 to 392 (IQMMGFFLMAVVYLVAGIPYS) form a helical membrane-spanning segment. The Extracellular segment spans residues 393–406 (WYWSKHEKTNKGFM). The chain crosses the membrane as a helical span at residues 407–427 (VLYGLIFFFSNFGPNTTTFII). Residues 428–441 (PAELFPARFRSTCH) are Cytoplasmic-facing. The helical transmembrane segment at 442 to 462 (GISGAAGKFGAIVGTVGFLWA) threads the bilayer. At 463 to 478 (TRHHEEDGFPDVKRVR) the chain is on the extracellular side. A helical transmembrane segment spans residues 479 to 499 (IAFLILGGVCIAGMIVTYLFT). The Cytoplasmic portion of the chain corresponds to 500-532 (RETMGRSLEENEDEIVSTSAGSSPANELLRRQY). A disordered region spans residues 509-532 (ENEDEIVSTSAGSSPANELLRRQY). Residues 515–524 (VSTSAGSSPA) are compositionally biased toward polar residues.

Belongs to the major facilitator superfamily. Phosphate:H(+) symporter (TC 2.A.1.9) family.

Its subcellular location is the membrane. Functionally, high-affinity transporter for external inorganic phosphate. In Arabidopsis thaliana (Mouse-ear cress), this protein is Probable inorganic phosphate transporter 1-9 (PHT1-9).